Here is a 342-residue protein sequence, read N- to C-terminus: Foldase protein PrsA (342 aa).

Residues 1 to 22 (MVSVKKIVASALVGVLMFSAVG) form the signal peptide. Residue C23 is the site of N-palmitoyl cysteine attachment. C23 carries S-diacylglycerol cysteine lipidation. One can recognise a PpiC domain in the interval 189–284 (DSGVLTKHLL…FGYHIIQAGA (96 aa)).

It belongs to the PrsA family.

The protein resides in the cell membrane. The catalysed reaction is [protein]-peptidylproline (omega=180) = [protein]-peptidylproline (omega=0). Plays a major role in protein secretion by helping the post-translocational extracellular folding of several secreted proteins. In Clostridium perfringens (strain 13 / Type A), this protein is Foldase protein PrsA.